The following is a 235-amino-acid chain: Purine nucleoside phosphorylase DeoD-type (235 aa).

His-4 provides a ligand contact to a purine D-ribonucleoside. Phosphate contacts are provided by residues Gly-20, Arg-24, Arg-43, and Arg-87–Thr-90. Residues Glu-162, Glu-179–Glu-181, and Ser-203–Asp-204 contribute to the a purine D-ribonucleoside site. Asp-204 serves as the catalytic Proton donor.

Belongs to the PNP/UDP phosphorylase family. Homohexamer; trimer of homodimers.

The catalysed reaction is a purine D-ribonucleoside + phosphate = a purine nucleobase + alpha-D-ribose 1-phosphate. It carries out the reaction a purine 2'-deoxy-D-ribonucleoside + phosphate = a purine nucleobase + 2-deoxy-alpha-D-ribose 1-phosphate. Functionally, catalyzes the reversible phosphorolytic breakdown of the N-glycosidic bond in the beta-(deoxy)ribonucleoside molecules, with the formation of the corresponding free purine bases and pentose-1-phosphate. The polypeptide is Purine nucleoside phosphorylase DeoD-type (Bacillus anthracis (strain CDC 684 / NRRL 3495)).